Reading from the N-terminus, the 191-residue chain is Cell division protein SepF (191 aa).

Residues 153 to 178 (FPEEASPSNVSSKKTSQYKFETNTTP) are compositionally biased toward polar residues. Residues 153–191 (FPEEASPSNVSSKKTSQYKFETNTTPEPAWGESKLSAYN) form a disordered region.

This sequence belongs to the SepF family. As to quaternary structure, homodimer. Interacts with FtsZ.

It localises to the cytoplasm. Functionally, cell division protein that is part of the divisome complex and is recruited early to the Z-ring. Probably stimulates Z-ring formation, perhaps through the cross-linking of FtsZ protofilaments. Its function overlaps with FtsA. This Prochlorococcus marinus subsp. pastoris (strain CCMP1986 / NIES-2087 / MED4) protein is Cell division protein SepF.